The primary structure comprises 201 residues: Probable molybdenum cofactor guanylyltransferase (201 aa).

GTP contacts are provided by residues leucine 16–glycine 18, lysine 28, aspartate 75, and aspartate 107. Residue aspartate 107 coordinates Mg(2+).

The protein belongs to the MobA family. It depends on Mg(2+) as a cofactor.

The protein resides in the cytoplasm. The catalysed reaction is Mo-molybdopterin + GTP + H(+) = Mo-molybdopterin guanine dinucleotide + diphosphate. Functionally, transfers a GMP moiety from GTP to Mo-molybdopterin (Mo-MPT) cofactor (Moco or molybdenum cofactor) to form Mo-molybdopterin guanine dinucleotide (Mo-MGD) cofactor. This is Probable molybdenum cofactor guanylyltransferase from Mycobacterium ulcerans (strain Agy99).